An 862-amino-acid chain; its full sequence is MLLEKIVEAISGRSEDNGKKVKGTIVLMKKNVLDFNDVNASLLDGVLEFLGKRVSLQLISVVHADPGNSLQGKRSNPAYLEKWLTTGTSLVAGESAFDVTFDWDEDIGVPGAFIINNFHFNEFYLKSLTLEDVPNHGNVHFVCNSWVYPAKKYKSERIFFANQAYLPGETPEPLRNYREKELVNLRGNGNGKLEEWDRVYDYALYNDLGDPEKGKQYARTILGGSAEYPYPRRGRTGRKPTKADPKSESRIPLLMSLDIYVPRDERFGHIKLSDFLTYALKSIVQFLIPEFQALFDSTPDEFDSFEDVLKLYEGGIKLPQGPFLKALTDSIPLEILKEIIRTDGEGKFKFPTPQVIQEDKSSWRTDEEFAREMLAGVNPVIISRLQEFPPKSQLDSEVYGNQNSTITKEHIENTLDGLTIDDAIKTNRLYILNHHDILMPYVRRINTTNTKLYASRTLLFLQDDGTMKPVAIELSLPHPDGDELGAVSKVYTPADQGVEGSIWQLAKAYVAVNDSGVHQLISHWLNTHAAIEPFVIATNRQLSVLHPIHKLLHPHFRDTMNINALARQILINAGGVLEMTVFPAKYAMEMSAVVYKSWVFPEQALPADLIKRGVAVEDSSSPHGVRLLIQDYPYAVDGLEIWSAIKSWVTEYCNFYYKSDELVLKDNELQAWWKELREEGHGDKKDEPWWPKMQTRQELKDSCTIIIWIASALHAAVNFGQYPYAGYLPNRPTLSRRFMPEPGTPEYEELKTNPDKAYLKTITPQLQTLLGISLIEILSRHASDEIYLGQRDSSEWTKDQEPIAAFERFGKKLSEIEDQIIQMNGDKKWKNRSGPVNVPYTLLFPTSEQGLTGKGIPNSVSI.

A PLAT domain is found at 36 to 161; that stretch reads NDVNASLLDG…KYKSERIFFA (126 aa). Residues 164 to 862 enclose the Lipoxygenase domain; it reads AYLPGETPEP…GKGIPNSVSI (699 aa). Fe cation-binding residues include histidine 523, histidine 528, histidine 714, asparagine 718, and isoleucine 862.

Belongs to the lipoxygenase family. In terms of assembly, monomer. Requires Fe cation as cofactor. In terms of tissue distribution, not detected in leaves, stems, flowers, roots, tubers and stolons during normal growth and development.

It is found in the cytoplasm. The enzyme catalyses (9Z,12Z)-octadecadienoate + O2 = (9S)-hydroperoxy-(10E,12Z)-octadecadienoate. The protein operates within lipid metabolism; oxylipin biosynthesis. Plant lipoxygenases may be involved in a number of diverse aspects of plant physiology including growth and development, pest resistance, and senescence or responses to wounding. May contribute to cell death during the hypersensitive response (HR) by the massive production of free fatty acid hydroperoxides. Catalyzes the hydroperoxidation of lipids containing a cis,cis-1,4-pentadiene structure. In Solanum tuberosum (Potato), this protein is Probable linoleate 9S-lipoxygenase 5 (LOX1.5).